The primary structure comprises 371 residues: Transcriptional regulator of yeast form adherence 2 (371 aa).

The segment at 16-44 (RNPAVLCSFYSKIGACRHGEKCSKKHLKP) adopts a C3H1-type 1 zinc-finger fold. Polar residues predominate over residues 94–107 (TVSQIDDSPHSNSG). The interval 94–194 (TVSQIDDSPH…NIEDAKLEDT (101 aa)) is disordered. Residues 115 to 124 (VETQEVETEN) are compositionally biased toward acidic residues. A compositionally biased stretch (basic and acidic residues) spans 132–194 (GDVKIDHNED…NIEDAKLEDT (63 aa)). The 88-residue stretch at 192-279 (EDTEKDKLPE…KPVYSDLSPV (88 aa)) folds into the RRM domain. Residues 281–309 (DFNDACCEEYRDYHDCQRGAMCNYMHVRL) form a C3H1-type 2 zinc finger. Positions 337–371 (ELPGDIRSSSSTNDDETNGNENGISSTMAVLEQLS) are disordered. Residues 355-371 (GNENGISSTMAVLEQLS) show a composition bias toward polar residues.

The protein resides in the nucleus. In terms of biological role, transcription factor required for yeast cell adherence to silicone substrate. This is Transcriptional regulator of yeast form adherence 2 (TRY2) from Candida albicans (strain SC5314 / ATCC MYA-2876) (Yeast).